Reading from the N-terminus, the 268-residue chain is Testis-specific serine/threonine-protein kinase 3 (268 aa).

Residues 10–265 (YQLGKTIGEG…IEEVSWHPWL (256 aa)) enclose the Protein kinase domain. ATP is bound by residues 16 to 24 (IGEGTYSKV) and K39. D134 acts as the Proton acceptor in catalysis. A Phosphoserine modification is found at S166. Phosphothreonine is present on T168.

This sequence belongs to the protein kinase superfamily. CAMK Ser/Thr protein kinase family. It depends on Mg(2+) as a cofactor. Requires Mn(2+) as cofactor. Autophosphorylated at Ser-166. Phosphorylation at Thr-168 by PDPK1 activates the serine/threonine protein kinase activity.

Its subcellular location is the cell projection. The protein resides in the cilium. It is found in the flagellum. The enzyme catalyses L-seryl-[protein] + ATP = O-phospho-L-seryl-[protein] + ADP + H(+). It carries out the reaction L-threonyl-[protein] + ATP = O-phospho-L-threonyl-[protein] + ADP + H(+). Its activity is regulated as follows. Activated by phosphorylation on Thr-168 by PDPK1. Functionally, serine/threonine protein kinase required for spermatid development and male fertility. The polypeptide is Testis-specific serine/threonine-protein kinase 3 (Homo sapiens (Human)).